Consider the following 451-residue polypeptide: UDP-N-acetylmuramoylalanine--D-glutamate ligase (451 aa).

120 to 126 (GSNGKTT) contacts ATP.

This sequence belongs to the MurCDEF family.

The protein localises to the cytoplasm. It carries out the reaction UDP-N-acetyl-alpha-D-muramoyl-L-alanine + D-glutamate + ATP = UDP-N-acetyl-alpha-D-muramoyl-L-alanyl-D-glutamate + ADP + phosphate + H(+). It participates in cell wall biogenesis; peptidoglycan biosynthesis. Cell wall formation. Catalyzes the addition of glutamate to the nucleotide precursor UDP-N-acetylmuramoyl-L-alanine (UMA). The protein is UDP-N-acetylmuramoylalanine--D-glutamate ligase (murD) of Bacillus subtilis (strain 168).